Consider the following 133-residue polypeptide: uncharacterized protein (133 aa).

This is an uncharacterized protein from Rickettsia conorii (strain ATCC VR-613 / Malish 7).